The sequence spans 173 residues: Adenine phosphoribosyltransferase (173 aa).

The protein belongs to the purine/pyrimidine phosphoribosyltransferase family. In terms of assembly, homodimer.

The protein localises to the cytoplasm. It catalyses the reaction AMP + diphosphate = 5-phospho-alpha-D-ribose 1-diphosphate + adenine. Its pathway is purine metabolism; AMP biosynthesis via salvage pathway; AMP from adenine: step 1/1. Its function is as follows. Catalyzes a salvage reaction resulting in the formation of AMP, that is energically less costly than de novo synthesis. This is Adenine phosphoribosyltransferase from Thermoanaerobacter pseudethanolicus (strain ATCC 33223 / 39E) (Clostridium thermohydrosulfuricum).